We begin with the raw amino-acid sequence, 341 residues long: Galactofuranose transporter permease protein YtfT (341 aa).

Over 1 to 25 (MMPQSLPDTTTPKRRFRWPTGMPQL) the chain is Cytoplasmic. The helical transmembrane segment at 26–46 (VALLLVLLVDSLVAPHFWQVV) threads the bilayer. Residues 47–65 (LQDGRLFGSPIDILNRAAP) are Periplasmic-facing. Transmembrane regions (helical) follow at residues 66–86 (VALL…DLSV) and 87–107 (GAVM…GFSL). Pro108 is a topological domain (periplasmic). Residues 109–129 (IVLLSALGTGILAGLWNGILV) traverse the membrane as a helical segment. Topologically, residues 130–136 (AILKIQP) are cytoplasmic. The chain crosses the membrane as a helical span at residues 137 to 157 (FVATLILMVAGRGVAQLITAG). Over 158 to 174 (QIVTFNSPDLSWFGSGS) the chain is Periplasmic. Residues 175–195 (LLFLPTPVIIAVLTLILFWLL) form a helical membrane-spanning segment. Over 196 to 223 (TRKTALGMFIEAVGINIRAAKNAGVNTR) the chain is Cytoplasmic. The helical transmembrane segment at 224 to 244 (IIVMLTYVLSGLCAAIAGIIV) threads the bilayer. Over 245 to 255 (AADIRGADANN) the chain is Periplasmic. A helical membrane pass occupies residues 256–276 (AGLWLELDAILAVVIGGGSLM). Residues 277–281 (GGRFN) are Cytoplasmic-facing. 2 helical membrane-spanning segments follow: residues 282 to 302 (LLLS…ILLS) and 303 to 323 (GFPP…VLIV). Over 324-341 (QSQRFISLIKGVRSRDKT) the chain is Cytoplasmic.

Belongs to the binding-protein-dependent transport system permease family. AraH/RbsC subfamily. As to quaternary structure, the complex is composed of two ATP-binding proteins (YtfR), two transmembrane proteins (YtfT and YjfF) and a solute-binding protein (YtfQ).

Its subcellular location is the cell inner membrane. Its function is as follows. Part of the ABC transporter complex YtfQRT-YjfF involved in galactofuranose transport. Probably responsible for the translocation of the substrate across the membrane. In Escherichia coli (strain K12), this protein is Galactofuranose transporter permease protein YtfT (ytfT).